The following is a 152-amino-acid chain: Transcriptional regulator MraZ (152 aa).

2 SpoVT-AbrB domains span residues 5-52 and 81-124; these read AQAI…PLKE and ATEC…SETE.

Belongs to the MraZ family. As to quaternary structure, forms oligomers.

The protein resides in the cytoplasm. The protein localises to the nucleoid. The protein is Transcriptional regulator MraZ of Mannheimia succiniciproducens (strain KCTC 0769BP / MBEL55E).